Here is a 697-residue protein sequence, read N- to C-terminus: Elongation factor G 2 (697 aa).

One can recognise a tr-type G domain in the interval 6 to 281 (TNYRNFGIFA…AVVDFLPNPT (276 aa)). GTP is bound by residues 15–22 (AHVDAGKT), 79–83 (DTPGH), and 133–136 (NKLD).

This sequence belongs to the TRAFAC class translation factor GTPase superfamily. Classic translation factor GTPase family. EF-G/EF-2 subfamily.

The protein localises to the cytoplasm. Functionally, catalyzes the GTP-dependent ribosomal translocation step during translation elongation. During this step, the ribosome changes from the pre-translocational (PRE) to the post-translocational (POST) state as the newly formed A-site-bound peptidyl-tRNA and P-site-bound deacylated tRNA move to the P and E sites, respectively. Catalyzes the coordinated movement of the two tRNA molecules, the mRNA and conformational changes in the ribosome. The protein is Elongation factor G 2 of Trichodesmium erythraeum (strain IMS101).